Reading from the N-terminus, the 172-residue chain is Ribosome maturation factor RimM (172 aa).

Residues 95–168 (AEGEFYYHQI…RVDVEIMEGL (74 aa)) enclose the PRC barrel domain.

It belongs to the RimM family. Binds ribosomal protein uS19.

It localises to the cytoplasm. In terms of biological role, an accessory protein needed during the final step in the assembly of 30S ribosomal subunit, possibly for assembly of the head region. Essential for efficient processing of 16S rRNA. May be needed both before and after RbfA during the maturation of 16S rRNA. It has affinity for free ribosomal 30S subunits but not for 70S ribosomes. The chain is Ribosome maturation factor RimM from Streptococcus equi subsp. zooepidemicus (strain MGCS10565).